A 159-amino-acid chain; its full sequence is Ribosomal RNA large subunit methyltransferase H (159 aa).

S-adenosyl-L-methionine is bound by residues Leu76, Gly108, and 127-132; that span reads FSKMTF.

This sequence belongs to the RNA methyltransferase RlmH family. Homodimer.

Its subcellular location is the cytoplasm. It catalyses the reaction pseudouridine(1915) in 23S rRNA + S-adenosyl-L-methionine = N(3)-methylpseudouridine(1915) in 23S rRNA + S-adenosyl-L-homocysteine + H(+). Functionally, specifically methylates the pseudouridine at position 1915 (m3Psi1915) in 23S rRNA. This is Ribosomal RNA large subunit methyltransferase H from Lachnospira eligens (strain ATCC 27750 / DSM 3376 / VPI C15-48 / C15-B4) (Eubacterium eligens).